The following is a 185-amino-acid chain: NAD(P)H-quinone oxidoreductase subunit J (185 aa).

It belongs to the complex I 30 kDa subunit family. NDH-1 can be composed of about 15 different subunits; different subcomplexes with different compositions have been identified which probably have different functions.

Its subcellular location is the cellular thylakoid membrane. The enzyme catalyses a plastoquinone + NADH + (n+1) H(+)(in) = a plastoquinol + NAD(+) + n H(+)(out). It catalyses the reaction a plastoquinone + NADPH + (n+1) H(+)(in) = a plastoquinol + NADP(+) + n H(+)(out). Functionally, NDH-1 shuttles electrons from an unknown electron donor, via FMN and iron-sulfur (Fe-S) centers, to quinones in the respiratory and/or the photosynthetic chain. The immediate electron acceptor for the enzyme in this species is believed to be plastoquinone. Couples the redox reaction to proton translocation, and thus conserves the redox energy in a proton gradient. Cyanobacterial NDH-1 also plays a role in inorganic carbon-concentration. This chain is NAD(P)H-quinone oxidoreductase subunit J, found in Prochlorococcus marinus (strain MIT 9303).